A 576-amino-acid polypeptide reads, in one-letter code: Arginine--tRNA ligase (576 aa).

The 'HIGH' region motif lies at 128 to 136 (PTGPMHIGH).

Belongs to the class-I aminoacyl-tRNA synthetase family. As to quaternary structure, monomer.

It is found in the cytoplasm. It carries out the reaction tRNA(Arg) + L-arginine + ATP = L-arginyl-tRNA(Arg) + AMP + diphosphate. The chain is Arginine--tRNA ligase from Rickettsia conorii (strain ATCC VR-613 / Malish 7).